Reading from the N-terminus, the 338-residue chain is 1-aminocyclopropane-1-carboxylate deaminase (338 aa).

Lysine 51 bears the N6-(pyridoxal phosphate)lysine mark. Serine 78 serves as the catalytic Nucleophile.

The protein belongs to the ACC deaminase/D-cysteine desulfhydrase family. Homotrimer. Requires pyridoxal 5'-phosphate as cofactor.

It catalyses the reaction 1-aminocyclopropane-1-carboxylate + H2O = 2-oxobutanoate + NH4(+). Its function is as follows. Catalyzes a cyclopropane ring-opening reaction, the irreversible conversion of 1-aminocyclopropane-1-carboxylate (ACC) to ammonia and alpha-ketobutyrate. Allows growth on ACC as a nitrogen source. This chain is 1-aminocyclopropane-1-carboxylate deaminase, found in Burkholderia ambifaria (strain MC40-6).